The chain runs to 188 residues: Elongation factor P (188 aa).

An N6-(3,6-diaminohexanoyl)-5-hydroxylysine modification is found at Lys-34.

Belongs to the elongation factor P family. May be beta-lysylated on the epsilon-amino group of Lys-34 by the combined action of EpmA and EpmB, and then hydroxylated on the C5 position of the same residue by EpmC (if this protein is present). Lysylation is critical for the stimulatory effect of EF-P on peptide-bond formation. The lysylation moiety may extend toward the peptidyltransferase center and stabilize the terminal 3-CCA end of the tRNA. Hydroxylation of the C5 position on Lys-34 may allow additional potential stabilizing hydrogen-bond interactions with the P-tRNA.

The protein resides in the cytoplasm. The protein operates within protein biosynthesis; polypeptide chain elongation. Involved in peptide bond synthesis. Alleviates ribosome stalling that occurs when 3 or more consecutive Pro residues or the sequence PPG is present in a protein, possibly by augmenting the peptidyl transferase activity of the ribosome. Modification of Lys-34 is required for alleviation. In Sodalis glossinidius (strain morsitans), this protein is Elongation factor P.